The sequence spans 98 residues: PE family immunomodulator PE35 (98 aa).

The 90-residue stretch at 1 to 90 (MEKMSHDPIA…DVARTYSQID (90 aa)) folds into the PE domain.

This sequence belongs to the mycobacterial PE family. In terms of assembly, interacts with PPE68. PE35/PPE68 complex interacts with human TLR2.

The protein localises to the secreted. It is found in the cell surface. Plays a major role in RD1-associated pathogenesis, and may contribute to the establishment and maintenance of M.tuberculosis infection. Together with PPE68, stimulates the secretion of IL-10 and MCP-1 from human macrophages, via the interaction with human Toll-like receptor 2 (TLR2). The protein is PE family immunomodulator PE35 (PE35) of Mycobacterium tuberculosis (strain CDC 1551 / Oshkosh).